The following is a 319-amino-acid chain: Cell surface A33 antigen (319 aa).

The signal sequence occupies residues 1-21; that stretch reads MLGKAGSVVWMLCAIWVAADA. Residues 22 to 134 enclose the Ig-like V-type domain; sequence LTVETTQDIL…QDVNAKSRVR (113 aa). Over 22 to 235 the chain is Extracellular; sequence LTVETTQDIL…VAPRPPSMNI (214 aa). 3 disulfides stabilise this stretch: Cys-43/Cys-117, Cys-146/Cys-222, and Cys-162/Cys-211. 4 N-linked (GlcNAc...) asparagine glycosylation sites follow: Asn-99, Asn-112, Asn-200, and Asn-223. Positions 140-227 constitute an Ig-like C2-type domain; the sequence is PPSKPDCSIQ…GIESCNITVA (88 aa). A helical transmembrane segment spans residues 236–256; it reads ALYAGIAGGVFVALIIIGVIV. Topologically, residues 257-319 are cytoplasmic; sequence YCCCCREKDD…GRSTPDQPFQ (63 aa). 2 stretches are compositionally biased toward basic and acidic residues: residues 267–276 and 284–308; these read KDQDREDARP and PKKE…DRWS. The disordered stretch occupies residues 267 to 319; it reads KDQDREDARPNRAAYQVPKKEQKEISRGREDEDDHRHEDRWSSGRSTPDQPFQ. Positions 309–319 are enriched in polar residues; it reads SGRSTPDQPFQ.

In terms of processing, palmitoylated.

The protein localises to the membrane. May play a role in cell-cell recognition and signaling. The polypeptide is Cell surface A33 antigen (Gpa33) (Mus musculus (Mouse)).